Reading from the N-terminus, the 293-residue chain is Rhomboid-like protease 1 (293 aa).

Positions 18-40 are disordered; the sequence is EHTPLYNAETGSRDSDSTSSGGA. 6 helical membrane-spanning segments follow: residues 62-82, 112-132, 148-168, 174-194, 217-237, and 262-282; these read VVLA…CLDT, LLLP…VFFQ, FTGL…TAFF, VGAS…MALT, LLMF…GGLL, and AAAI…LYAV. The active-site Nucleophile is the Ser177. Residue His232 is part of the active site.

The protein belongs to the peptidase S54 family.

The protein resides in the cytoplasmic vesicle. It is found in the secretory vesicle. Its subcellular location is the microneme membrane. It carries out the reaction Cleaves type-1 transmembrane domains using a catalytic dyad composed of serine and histidine that are contributed by different transmembrane domains.. In terms of biological role, serine protease involved in intramembrane proteolysis and the subsequent release of polypeptides from their membrane anchors. Has no detectable activity towards MIC2. The polypeptide is Rhomboid-like protease 1 (ROM1) (Toxoplasma gondii).